The sequence spans 407 residues: 1-deoxy-D-xylulose 5-phosphate reductoisomerase (407 aa).

NADPH-binding residues include Thr-25, Gly-26, Ser-27, Ile-28, Asn-53, and Asn-136. Lys-137 contributes to the 1-deoxy-D-xylulose 5-phosphate binding site. Residue Glu-138 participates in NADPH binding. Asp-162 provides a ligand contact to Mn(2+). Residues Ser-163, Glu-164, Ser-188, and His-211 each contribute to the 1-deoxy-D-xylulose 5-phosphate site. A Mn(2+)-binding site is contributed by Glu-164. Gly-217 provides a ligand contact to NADPH. Residues Ser-224, Asn-229, Lys-230, and Glu-233 each contribute to the 1-deoxy-D-xylulose 5-phosphate site. A Mn(2+)-binding site is contributed by Glu-233.

Belongs to the DXR family. The cofactor is Mg(2+). Mn(2+) serves as cofactor.

It catalyses the reaction 2-C-methyl-D-erythritol 4-phosphate + NADP(+) = 1-deoxy-D-xylulose 5-phosphate + NADPH + H(+). It functions in the pathway isoprenoid biosynthesis; isopentenyl diphosphate biosynthesis via DXP pathway; isopentenyl diphosphate from 1-deoxy-D-xylulose 5-phosphate: step 1/6. In terms of biological role, catalyzes the NADPH-dependent rearrangement and reduction of 1-deoxy-D-xylulose-5-phosphate (DXP) to 2-C-methyl-D-erythritol 4-phosphate (MEP). The sequence is that of 1-deoxy-D-xylulose 5-phosphate reductoisomerase from Nitrobacter hamburgensis (strain DSM 10229 / NCIMB 13809 / X14).